Reading from the N-terminus, the 297-residue chain is Coatomer subunit epsilon-2 (297 aa).

This sequence belongs to the COPE family. In terms of assembly, oligomeric complex that consists of at least the alpha, beta, beta', gamma, delta, epsilon and zeta subunits.

The protein resides in the cytoplasm. The protein localises to the golgi apparatus membrane. Its subcellular location is the cytoplasmic vesicle. It localises to the COPI-coated vesicle membrane. The coatomer is a cytosolic protein complex that binds to dilysine motifs and reversibly associates with Golgi non-clathrin-coated vesicles, which further mediate biosynthetic protein transport from the ER, via the Golgi up to the trans Golgi network. The coatomer complex is required for budding from Golgi membranes, and is essential for the retrograde Golgi-to-ER transport of dilysine-tagged proteins. The chain is Coatomer subunit epsilon-2 from Oryza sativa subsp. japonica (Rice).